A 312-amino-acid chain; its full sequence is Protoheme IX farnesyltransferase 2 (312 aa).

8 helical membrane-spanning segments follow: residues 31–51 (VMSLVIFTALVGLMIAPGHIH), 52–72 (PVLGFIAILCIAVGAGASGAL), 119–139 (ALVNWYAGGLLAFTIFFYVVI), 152–172 (IVIGGAAGALPPVVAWAAATG), 179–199 (LLLFLIIFFWTPPHFWALALF), 225–245 (ILLYTIVLVAIAAAPWPLGYF), 247–267 (WVYGVTSLILGAGMLVLAIEV), and 283–303 (LFAFSILYLFALFAVLLLDVV).

This sequence belongs to the UbiA prenyltransferase family. Protoheme IX farnesyltransferase subfamily.

It localises to the cell inner membrane. The catalysed reaction is heme b + (2E,6E)-farnesyl diphosphate + H2O = Fe(II)-heme o + diphosphate. The protein operates within porphyrin-containing compound metabolism; heme O biosynthesis; heme O from protoheme: step 1/1. Functionally, converts heme B (protoheme IX) to heme O by substitution of the vinyl group on carbon 2 of heme B porphyrin ring with a hydroxyethyl farnesyl side group. This Nitrobacter winogradskyi (strain ATCC 25391 / DSM 10237 / CIP 104748 / NCIMB 11846 / Nb-255) protein is Protoheme IX farnesyltransferase 2.